The sequence spans 42 residues: MQEQILASCVNLLATLNQKCLFPCNNKGFFIEFNSLWTFFFV.

This chain is Aspartate-semialdehyde dehydrogenase leader peptide, found in Streptococcus mutans serotype c (strain ATCC 700610 / UA159).